The primary structure comprises 41 residues: uncharacterized protein (41 aa).

Positions 19 to 41 are disordered; sequence NSTRNSSSSSRSSYSSRTTVFSL.

This is an uncharacterized protein from Dictyostelium discoideum (Social amoeba).